The sequence spans 90 residues: uncharacterized protein (90 aa).

This is an uncharacterized protein from Mycobacterium tuberculosis (strain ATCC 25618 / H37Rv).